Here is a 370-residue protein sequence, read N- to C-terminus: UDP-N-acetylglucosamine--N-acetylmuramyl-(pentapeptide) pyrophosphoryl-undecaprenol N-acetylglucosamine transferase (370 aa).

Residues Thr15–Gly17, Asn129, Arg170, Ser199, Ile254, and Gln299 each bind UDP-N-acetyl-alpha-D-glucosamine.

This sequence belongs to the glycosyltransferase 28 family. MurG subfamily.

It localises to the cell inner membrane. The enzyme catalyses di-trans,octa-cis-undecaprenyl diphospho-N-acetyl-alpha-D-muramoyl-L-alanyl-D-glutamyl-meso-2,6-diaminopimeloyl-D-alanyl-D-alanine + UDP-N-acetyl-alpha-D-glucosamine = di-trans,octa-cis-undecaprenyl diphospho-[N-acetyl-alpha-D-glucosaminyl-(1-&gt;4)]-N-acetyl-alpha-D-muramoyl-L-alanyl-D-glutamyl-meso-2,6-diaminopimeloyl-D-alanyl-D-alanine + UDP + H(+). It functions in the pathway cell wall biogenesis; peptidoglycan biosynthesis. Its function is as follows. Cell wall formation. Catalyzes the transfer of a GlcNAc subunit on undecaprenyl-pyrophosphoryl-MurNAc-pentapeptide (lipid intermediate I) to form undecaprenyl-pyrophosphoryl-MurNAc-(pentapeptide)GlcNAc (lipid intermediate II). This chain is UDP-N-acetylglucosamine--N-acetylmuramyl-(pentapeptide) pyrophosphoryl-undecaprenol N-acetylglucosamine transferase, found in Magnetococcus marinus (strain ATCC BAA-1437 / JCM 17883 / MC-1).